Here is a 250-residue protein sequence, read N- to C-terminus: Ubiquinone/menaquinone biosynthesis C-methyltransferase UbiE (250 aa).

Residues Thr74, Asp94, 122 to 123, and Ser139 each bind S-adenosyl-L-methionine; that span reads DA.

This sequence belongs to the class I-like SAM-binding methyltransferase superfamily. MenG/UbiE family.

The catalysed reaction is a 2-demethylmenaquinol + S-adenosyl-L-methionine = a menaquinol + S-adenosyl-L-homocysteine + H(+). The enzyme catalyses a 2-methoxy-6-(all-trans-polyprenyl)benzene-1,4-diol + S-adenosyl-L-methionine = a 5-methoxy-2-methyl-3-(all-trans-polyprenyl)benzene-1,4-diol + S-adenosyl-L-homocysteine + H(+). It functions in the pathway quinol/quinone metabolism; menaquinone biosynthesis; menaquinol from 1,4-dihydroxy-2-naphthoate: step 2/2. Its pathway is cofactor biosynthesis; ubiquinone biosynthesis. Its function is as follows. Methyltransferase required for the conversion of demethylmenaquinol (DMKH2) to menaquinol (MKH2) and the conversion of 2-polyprenyl-6-methoxy-1,4-benzoquinol (DDMQH2) to 2-polyprenyl-3-methyl-6-methoxy-1,4-benzoquinol (DMQH2). This chain is Ubiquinone/menaquinone biosynthesis C-methyltransferase UbiE, found in Dinoroseobacter shibae (strain DSM 16493 / NCIMB 14021 / DFL 12).